Here is a 312-residue protein sequence, read N- to C-terminus: Bark storage protein A (312 aa).

The N-terminal stretch at 1–24 (MPQQSMQASLIDPIAEIERSNCKI) is a signal peptide. Asparagine 70 is a glycosylation site (N-linked (GlcNAc...) asparagine).

The protein to wound-inducible poplar endochitinases. In terms of assembly, monomer. As to expression, bark.

May play a role in nitrogen storage. This is Bark storage protein A (BSPA) from Populus deltoides (Eastern poplar).